Reading from the N-terminus, the 154-residue chain is MCKMQLLSCIALSLVLVANSAPTTSSTKETQQQLEQLLLDLRLLLNGVNNYEDPKLSRMLTFKFYTPKKATELTHLQCLAEELKPLEEVLYLAQSKNFHLTDIKELMSNINVTLLKLKGSETRFKCEYDDETATITEFLNKWITFCQSIFSTLT.

Residues 1–20 (MCKMQLLSCIALSLVLVANS) form the signal peptide. Thr23 is a glycosylation site (O-linked (GalNAc...) threonine). A disulfide bond links Cys78 and Cys126.

This sequence belongs to the IL-2 family.

It is found in the secreted. Its function is as follows. Cytokine produced by activated CD4-positive helper T-cells and to a lesser extend activated CD8-positive T-cells and natural killer (NK) cells that plays pivotal roles in the immune response and tolerance. Binds to a receptor complex composed of either the high-affinity trimeric IL-2R (IL2RA/CD25, IL2RB/CD122 and IL2RG/CD132) or the low-affinity dimeric IL-2R (IL2RB and IL2RG). Interaction with the receptor leads to oligomerization and conformation changes in the IL-2R subunits resulting in downstream signaling starting with phosphorylation of JAK1 and JAK3. In turn, JAK1 and JAK3 phosphorylate the receptor to form a docking site leading to the phosphorylation of several substrates including STAT5. This process leads to activation of several pathways including STAT, phosphoinositide-3-kinase/PI3K and mitogen-activated protein kinase/MAPK pathways. Functions as a T-cell growth factor and can increase NK-cell cytolytic activity as well. Promotes strong proliferation of activated B-cells and subsequently immunoglobulin production. Plays a pivotal role in regulating the adaptive immune system by controlling the survival and proliferation of regulatory T-cells, which are required for the maintenance of immune tolerance. Moreover, participates in the differentiation and homeostasis of effector T-cell subsets, including Th1, Th2, Th17 as well as memory CD8-positive T-cells. The sequence is that of Interleukin-2 (IL2) from Mirounga angustirostris (Northern elephant seal).